Reading from the N-terminus, the 203-residue chain is Histidine biosynthesis bifunctional protein HisIE (203 aa).

The interval 1-114 (MLTEQQRREL…FGDTAHQWLF (114 aa)) is phosphoribosyl-AMP cyclohydrolase. A phosphoribosyl-ATP pyrophosphohydrolase region spans residues 115–203 (LYQLEQLLAE…VIENLRKRHQ (89 aa)).

It in the N-terminal section; belongs to the PRA-CH family. The protein in the C-terminal section; belongs to the PRA-PH family.

The protein resides in the cytoplasm. The enzyme catalyses 1-(5-phospho-beta-D-ribosyl)-ATP + H2O = 1-(5-phospho-beta-D-ribosyl)-5'-AMP + diphosphate + H(+). It catalyses the reaction 1-(5-phospho-beta-D-ribosyl)-5'-AMP + H2O = 1-(5-phospho-beta-D-ribosyl)-5-[(5-phospho-beta-D-ribosylamino)methylideneamino]imidazole-4-carboxamide. It functions in the pathway amino-acid biosynthesis; L-histidine biosynthesis; L-histidine from 5-phospho-alpha-D-ribose 1-diphosphate: step 2/9. Its pathway is amino-acid biosynthesis; L-histidine biosynthesis; L-histidine from 5-phospho-alpha-D-ribose 1-diphosphate: step 3/9. The chain is Histidine biosynthesis bifunctional protein HisIE from Escherichia coli O6:H1 (strain CFT073 / ATCC 700928 / UPEC).